The chain runs to 453 residues: Gastrin/cholecystokinin type B receptor (453 aa).

Residues 1 to 57 (MELLKLNRSAQGSGAGPGASLCRAGGALLNSSGAGNLSCEPPRLRGAGTRELELAIR) lie on the Extracellular side of the membrane. N-linked (GlcNAc...) asparagine glycans are attached at residues Asn-7, Asn-30, and Asn-36. Residues 58–79 (VTLYAVIFLMSVGGNVLIIVVL) traverse the membrane as a helical segment. Residues 80 to 87 (GLSRRLRT) are Cytoplasmic-facing. Residues 88–109 (VTNAFLLSLAVSDLLLAVACMP) form a helical membrane-spanning segment. Topologically, residues 110-131 (FTLLPNLMGTFIFGTVVCKAVS) are extracellular. Cysteines 127 and 206 form a disulfide. The helical transmembrane segment at 132–150 (YLMGVSVSVSTLSLVAIAL) threads the bilayer. Topologically, residues 151–170 (ERYSAICRPLQARVWQTRSH) are cytoplasmic. Residues 171–189 (AARVIIATWMLSGLLMVPY) traverse the membrane as a helical segment. Residues 190–220 (PVYTAVQPAGGARALQCVHRWPSARVRQTWS) are Extracellular-facing. The chain crosses the membrane as a helical span at residues 221–243 (VLLLLLLFFVPGVVMAVAYGLIS). At 244–339 (RELYLGLRFD…KLLAKKRVVR (96 aa)) the chain is on the cytoplasmic side. Residues 258–286 (SESRVRSQGGLRGGAGPGPAPPNGSCRPE) form a disordered region. The chain crosses the membrane as a helical span at residues 340 to 361 (MLLVIVVLFFLCWLPLYSANTW). The Extracellular segment spans residues 362–379 (RAFDSSGAHRALSGAPIS). A helical membrane pass occupies residues 380–400 (FIHLLSYASACVNPLVYCFMH). The Cytoplasmic segment spans residues 401–453 (RRFRQACLETCARCCPRPPRARPRPLPDEDPPTPSIASLSRLSYTTISTLGPG). A lipid anchor (S-palmitoyl cysteine) is attached at Cys-414. Positions 422–453 (RPRPLPDEDPPTPSIASLSRLSYTTISTLGPG) are disordered. Residues 435 to 453 (SIASLSRLSYTTISTLGPG) are compositionally biased toward polar residues.

It belongs to the G-protein coupled receptor 1 family. In terms of tissue distribution, parietal cells, pancreas, brain and various neoplastic tissues.

It localises to the cell membrane. Functionally, receptor for gastrin and cholecystokinin. The CCK-B receptors occur throughout the central nervous system where they modulate anxiety, analgesia, arousal, and neuroleptic activity. This receptor mediates its action by association with G proteins that activate a phosphatidylinositol-calcium second messenger system. This is Gastrin/cholecystokinin type B receptor (CCKBR) from Canis lupus familiaris (Dog).